The primary structure comprises 328 residues: Malate dehydrogenase (328 aa).

Gly-12–Gly-18 lines the NAD(+) pocket. Positions 95 and 101 each coordinate substrate. NAD(+) contacts are provided by residues Asn-108, Gln-115, and Val-132–Asn-134. Positions 134 and 165 each coordinate substrate. His-190 acts as the Proton acceptor in catalysis.

The protein belongs to the LDH/MDH superfamily. MDH type 2 family.

It catalyses the reaction (S)-malate + NAD(+) = oxaloacetate + NADH + H(+). Its function is as follows. Catalyzes the reversible oxidation of malate to oxaloacetate. In Leptothrix cholodnii (strain ATCC 51168 / LMG 8142 / SP-6) (Leptothrix discophora (strain SP-6)), this protein is Malate dehydrogenase.